We begin with the raw amino-acid sequence, 448 residues long: Protein odr-4 homolog (448 aa).

Helical transmembrane passes span 76–96 and 428–448; these read ASQL…FLMT and GLLI…YYII.

Belongs to the ODR-4 family.

Its subcellular location is the membrane. May play a role in the trafficking of a subset of G-protein coupled receptors. The protein is Protein odr-4 homolog (odr4) of Xenopus tropicalis (Western clawed frog).